A 265-amino-acid chain; its full sequence is Silencing boundary-establishment protein FUB1-like protein (265 aa).

The interval 194-265 (HPENRSRNEQ…MPPGSSDMFM (72 aa)) is disordered.

It belongs to the proteasome inhibitor PI31 family. As to quaternary structure, interacts with the 20S proteasome.

Its subcellular location is the cytoplasm. The protein localises to the nucleus. May play a role in the establishment of transcriptional silencing boundaries, preventing the propagation of heterochromatic silencing. This chain is Silencing boundary-establishment protein FUB1-like protein, found in Schizosaccharomyces pombe (strain 972 / ATCC 24843) (Fission yeast).